The sequence spans 726 residues: Dipeptidyl-peptidase 5 (726 aa).

The first 19 residues, 1–19 (MAAAKWLIASLAFASSGLA), serve as a signal peptide directing secretion. N-linked (GlcNAc...) asparagine glycosylation is found at Asn-96 and Asn-252. The interval 269-291 (AEPINKRNGPRTPQAIEGASSSP) is disordered. Ser-558 (charge relay system) is an active-site residue. A glycan (N-linked (GlcNAc...) asparagine) is linked at Asn-605. Catalysis depends on charge relay system residues Asp-641 and His-673. N-linked (GlcNAc...) asparagine glycosylation occurs at Asn-699.

It belongs to the peptidase S9C family.

The protein resides in the secreted. Its function is as follows. Extracellular dipeptidyl-peptidase which removes N-terminal dipeptides sequentially from polypeptides having unsubstituted N-termini. Contributes to pathogenicity. This is Dipeptidyl-peptidase 5 (DPP5) from Trichophyton equinum (Horse ringworm fungus).